A 432-amino-acid chain; its full sequence is Amino-acid acetyltransferase (432 aa).

Residues 286 to 425 form the N-acetyltransferase domain; the sequence is EVVREASIED…ASLYNYQRNS (140 aa).

Belongs to the acetyltransferase family. ArgA subfamily.

It is found in the cytoplasm. The enzyme catalyses L-glutamate + acetyl-CoA = N-acetyl-L-glutamate + CoA + H(+). It functions in the pathway amino-acid biosynthesis; L-arginine biosynthesis; N(2)-acetyl-L-ornithine from L-glutamate: step 1/4. In Pseudomonas putida (strain GB-1), this protein is Amino-acid acetyltransferase.